The following is a 666-amino-acid chain: MTREEAKKRIERLRELIEYHNYRYYVLDSPEISDEEYDKLYRELVTLEKQFPEFITPDSPTQRVGAPPAKEFATVTHEVPMLSLDNAFTEDEIKAFDQRVRSALNQQHVEYFCEHKLDGLAVSLLYENGLFVRGSTRGNGYVGEDVTANLKTIKTIPLRLKGENIPPVVEIRGEAFMMLRDFEALNEQRQALGQPLFANPRNAAAGSIRQLDSSITAQRKLYFMPYGFGLVQGMDFETQERFLKQCQEWGFRINEHNRKASSIEEALEFIRYWTEHRVELPFPADGVVIKVNNLRYWDILGTTAHAPRYAIAYKFPAEEKETKLKDVVFQVGRTGIITPVAMLEPVVLDGATVSRATLHNFDIVRQLDVRKGDVVKLKRAGMVIPEIIGVAAEKRTGKEEQIEPPTTCPVCGGPTEWDGAYLKCVNITCPAQLKGHLLHWASRDAMDIDGLGESIIENLVDMGLVKNIADLYKLSVQDLLTLPRLAQRSATKLYENIQRSKDRPFFRVLYGLGIPRVGLKTAQMLAEHFGSINALLNATMDELTSIEGIGTDTAETILKALQSPQVHELIDQLKTLGLKMEQESIEGPLKGLTFVFTGTLTSMSRGDAAKLVQSLGGKVASSVSKNVDYVVVGEDPGSKLDKAQKLGLTIIDEEAFLKMVKREHNG.

NAD(+) is bound by residues 34–38, 83–84, and Glu114; these read DEEYD and SL. Lys116 (N6-AMP-lysine intermediate) is an active-site residue. Residues Arg137, Glu174, Lys290, and Lys314 each coordinate NAD(+). Cys408, Cys411, Cys424, and Cys429 together coordinate Zn(2+). One can recognise a BRCT domain in the interval 584-666; it reads SIEGPLKGLT…LKMVKREHNG (83 aa).

It belongs to the NAD-dependent DNA ligase family. LigA subfamily. Mg(2+) is required as a cofactor. The cofactor is Mn(2+).

The catalysed reaction is NAD(+) + (deoxyribonucleotide)n-3'-hydroxyl + 5'-phospho-(deoxyribonucleotide)m = (deoxyribonucleotide)n+m + AMP + beta-nicotinamide D-nucleotide.. In terms of biological role, DNA ligase that catalyzes the formation of phosphodiester linkages between 5'-phosphoryl and 3'-hydroxyl groups in double-stranded DNA using NAD as a coenzyme and as the energy source for the reaction. It is essential for DNA replication and repair of damaged DNA. The sequence is that of DNA ligase from Coprothermobacter proteolyticus (strain ATCC 35245 / DSM 5265 / OCM 4 / BT).